A 185-amino-acid chain; its full sequence is MARVYVGNLDPRVTARELEDEFRVFGVLRSVWVARKPPGFAFIDFDDRRDAQDAIRDIDGKNGWRVELSRNASSGRGGRDRYGSSESKCYECGETGHFARECRLRIGSGGLGSGRRRSRSRSRSRSPRYRRSPSYGRRSYSPAGRSPRRRSVSPARARSYSRSPQYNRGRDESPAYDNGYRRSRS.

An RRM domain is found at 2–73; that stretch reads ARVYVGNLDP…WRVELSRNAS (72 aa). A CCHC-type zinc finger spans residues 87–104; the sequence is SKCYECGETGHFARECRL. The tract at residues 109 to 185 is disordered; that stretch reads GGLGSGRRRS…YDNGYRRSRS (77 aa). A compositionally biased stretch (basic residues) spans 114-131; sequence GRRRSRSRSRSRSPRYRR. Low complexity-rich tracts occupy residues 132–145 and 152–163; these read SPSY…PAGR and VSPARARSYSRS.

It belongs to the splicing factor SR family. In terms of processing, extensively phosphorylated on serine residues in the RS domain. As to expression, expressed in roots, leaves and immature seeds.

Its subcellular location is the nucleus. In terms of biological role, involved in pre-mRNA splicing. This chain is Serine/arginine-rich splicing factor RSZ21A (RSZ21A), found in Oryza sativa subsp. japonica (Rice).